Reading from the N-terminus, the 246-residue chain is DNA polymerase sliding clamp (246 aa).

This sequence belongs to the PCNA family. As to quaternary structure, homotrimer. The subunits circularize to form a toroid; DNA passes through its center. Replication factor C (RFC) is required to load the toroid on the DNA.

Sliding clamp subunit that acts as a moving platform for DNA processing. Responsible for tethering the catalytic subunit of DNA polymerase and other proteins to DNA during high-speed replication. In Thermoplasma acidophilum (strain ATCC 25905 / DSM 1728 / JCM 9062 / NBRC 15155 / AMRC-C165), this protein is DNA polymerase sliding clamp.